A 143-amino-acid polypeptide reads, in one-letter code: Small ribosomal subunit protein eS12 (143 aa).

Belongs to the eukaryotic ribosomal protein eS12 family. As to quaternary structure, component of the small ribosomal subunit. Mature ribosomes consist of a small (40S) and a large (60S) subunit. The 40S subunit contains about 32 different proteins and 1 molecule of RNA (18S). The 60S subunit contains 45 different proteins and 3 molecules of RNA (25S, 5.8S and 5S).

It localises to the cytoplasm. Its function is as follows. Component of the ribosome, a large ribonucleoprotein complex responsible for the synthesis of proteins in the cell. The small ribosomal subunit (SSU) binds messenger RNAs (mRNAs) and translates the encoded message by selecting cognate aminoacyl-transfer RNA (tRNA) molecules. The large subunit (LSU) contains the ribosomal catalytic site termed the peptidyl transferase center (PTC), which catalyzes the formation of peptide bonds, thereby polymerizing the amino acids delivered by tRNAs into a polypeptide chain. The nascent polypeptides leave the ribosome through a tunnel in the LSU and interact with protein factors that function in enzymatic processing, targeting, and the membrane insertion of nascent chains at the exit of the ribosomal tunnel. The chain is Small ribosomal subunit protein eS12 (RPS12) from Candida albicans (strain SC5314 / ATCC MYA-2876) (Yeast).